We begin with the raw amino-acid sequence, 388 residues long: Succinate--CoA ligase [ADP-forming] subunit beta (388 aa).

Residues 9–244 enclose the ATP-grasp domain; it reads KQLFAEFGLP…PSQEDKREAH (236 aa). Residues Lys-46, 53-55, Glu-99, Ser-102, and Glu-107 each bind ATP; that span reads GRG. Residues Asn-199 and Asp-213 each coordinate Mg(2+). Substrate is bound by residues Asn-264 and 321-323; that span reads GIV.

The protein belongs to the succinate/malate CoA ligase beta subunit family. Heterotetramer of two alpha and two beta subunits. Requires Mg(2+) as cofactor.

It carries out the reaction succinate + ATP + CoA = succinyl-CoA + ADP + phosphate. The catalysed reaction is GTP + succinate + CoA = succinyl-CoA + GDP + phosphate. Its pathway is carbohydrate metabolism; tricarboxylic acid cycle; succinate from succinyl-CoA (ligase route): step 1/1. Its function is as follows. Succinyl-CoA synthetase functions in the citric acid cycle (TCA), coupling the hydrolysis of succinyl-CoA to the synthesis of either ATP or GTP and thus represents the only step of substrate-level phosphorylation in the TCA. The beta subunit provides nucleotide specificity of the enzyme and binds the substrate succinate, while the binding sites for coenzyme A and phosphate are found in the alpha subunit. The protein is Succinate--CoA ligase [ADP-forming] subunit beta of Vibrio vulnificus (strain YJ016).